Reading from the N-terminus, the 936-residue chain is Sine oculis-binding protein homolog A (936 aa).

Basic and acidic residues predominate over residues 1–14 (MAEMEKEGRPPESK). Disordered stretches follow at residues 1–46 (MAEM…GQAG) and 108–151 (ASTL…HGGL). Positions 108–144 (ASTLENSSGSPPHANSSGSTPTSRNGVTAESSVNPSS) are enriched in polar residues. 2 consecutive FCS-type zinc fingers follow at residues 169–207 (EDSS…KCFA) and 247–287 (LKTN…KCLN). Disordered regions lie at residues 311 to 330 (LPTS…LTPE), 336 to 424 (LSEL…VMTP), 486 to 511 (SPHL…HPAA), 574 to 632 (NPQR…KQTE), 697 to 727 (PPPA…DTYS), and 842 to 877 (DSAG…EDHA). A compositionally biased stretch (low complexity) spans 349–382 (GATIAGPSGSTSGSPSEAGTVCSSSSSSSSSSSS). The span at 395–404 (SLPPPHPPPI) shows a compositional bias: pro residues. Polar residues-rich tracts occupy residues 617 to 632 (PPNS…KQTE), 708 to 717 (DGSTSISTGT), and 850 to 859 (NDQSAITTGT).

Belongs to the SOBP family.

Functionally, implicated in development of the cochlea. The protein is Sine oculis-binding protein homolog A (sobpa) of Danio rerio (Zebrafish).